Reading from the N-terminus, the 530-residue chain is Bifunctional purine biosynthesis protein PurH (530 aa).

Residues Met1–Thr147 enclose the MGS-like domain.

It belongs to the PurH family.

The enzyme catalyses (6R)-10-formyltetrahydrofolate + 5-amino-1-(5-phospho-beta-D-ribosyl)imidazole-4-carboxamide = 5-formamido-1-(5-phospho-D-ribosyl)imidazole-4-carboxamide + (6S)-5,6,7,8-tetrahydrofolate. It catalyses the reaction IMP + H2O = 5-formamido-1-(5-phospho-D-ribosyl)imidazole-4-carboxamide. Its pathway is purine metabolism; IMP biosynthesis via de novo pathway; 5-formamido-1-(5-phospho-D-ribosyl)imidazole-4-carboxamide from 5-amino-1-(5-phospho-D-ribosyl)imidazole-4-carboxamide (10-formyl THF route): step 1/1. It participates in purine metabolism; IMP biosynthesis via de novo pathway; IMP from 5-formamido-1-(5-phospho-D-ribosyl)imidazole-4-carboxamide: step 1/1. The protein is Bifunctional purine biosynthesis protein PurH of Neisseria meningitidis serogroup A / serotype 4A (strain DSM 15465 / Z2491).